The primary structure comprises 391 residues: Eukaryotic initiation factor 4A-3 (391 aa).

A Q motif motif is present at residues 18–46 (ASFAEMGIKDDLLRGVYQYGFEKPSAIQQ). The Helicase ATP-binding domain maps to 49 to 219 (VLPIISGRDV…SKFMTDPVRI (171 aa)). 62–69 (AQSGTGKT) serves as a coordination point for ATP. Residues 167–170 (DESD) carry the DEAD box motif. Residues 230–391 (GIKQFFVAVE…EMPMNVADLI (162 aa)) enclose the Helicase C-terminal domain.

This sequence belongs to the DEAD box helicase family. eIF4A subfamily. In terms of assembly, eIF4F is a multi-subunit complex, the composition of which varies with external and internal environmental conditions. It is composed of at least EIF4A, EIF4E and EIF4G.

The enzyme catalyses ATP + H2O = ADP + phosphate + H(+). Functionally, ATP-dependent RNA helicase which is a subunit of the eIF4F complex involved in cap recognition and is required for mRNA binding to ribosome. In the current model of translation initiation, eIF4A unwinds RNA secondary structures in the 5'-UTR of mRNAs which is necessary to allow efficient binding of the small ribosomal subunit, and subsequent scanning for the initiator codon. The chain is Eukaryotic initiation factor 4A-3 from Nicotiana plumbaginifolia (Leadwort-leaved tobacco).